The primary structure comprises 156 residues: Small ribosomal subunit protein uS7 (156 aa).

The protein belongs to the universal ribosomal protein uS7 family. Part of the 30S ribosomal subunit. Contacts proteins S9 and S11.

One of the primary rRNA binding proteins, it binds directly to 16S rRNA where it nucleates assembly of the head domain of the 30S subunit. Is located at the subunit interface close to the decoding center, probably blocks exit of the E-site tRNA. This Kineococcus radiotolerans (strain ATCC BAA-149 / DSM 14245 / SRS30216) protein is Small ribosomal subunit protein uS7.